Consider the following 353-residue polypeptide: GTPase Obg (353 aa).

Residues 1 to 159 (MKFIDEATIK…FELYLELKVL (159 aa)) form the Obg domain. An OBG-type G domain is found at 160–332 (ADVGLLGMPN…LTYAIMEHVE (173 aa)). Residues 166 to 173 (GMPNAGKS), 191 to 195 (FTTLH), 213 to 216 (DVPG), 284 to 287 (NKVD), and 313 to 315 (SAL) each bind GTP. Positions 173 and 193 each coordinate Mg(2+).

It belongs to the TRAFAC class OBG-HflX-like GTPase superfamily. OBG GTPase family. As to quaternary structure, monomer. It depends on Mg(2+) as a cofactor.

It is found in the cytoplasm. Functionally, an essential GTPase which binds GTP, GDP and possibly (p)ppGpp with moderate affinity, with high nucleotide exchange rates and a fairly low GTP hydrolysis rate. Plays a role in control of the cell cycle, stress response, ribosome biogenesis and in those bacteria that undergo differentiation, in morphogenesis control. The chain is GTPase Obg from Methylobacillus flagellatus (strain ATCC 51484 / DSM 6875 / VKM B-1610 / KT).